Reading from the N-terminus, the 505-residue chain is MSPREIEVSEPREVGITELVLRDAHQSLMATRMAMEDMVGACADIDAAGYWSVECWGGATYDSCIRFLNEDPWERLRTFRKLMPNSRLQMLLRGQNLLGYRHYNDEVVDRFVDKSAENGMDVFRVFDAMNDPRNMAHAMAAVKKAGKHAQGTICYTISPVHTVEGYVKLAGQLLDMGADSIALKDMAALLKPQPAYDIIKAIKDTYGQKTQINLHCHSTTGVTEVSLMKAIEAGVDVVDTAISSMSLGPGHNPTESVAEMLEGTGYTTNLDYDRLHKIRDHFKAIRPKYKKFESKTLVDTSIFKSQIPGGMLSNMESQLRAQGAEDKMDEVMAEVPRVRKAAGFPPLVTPSSQIVGTQAVFNVMMGEYKRMTGEFADIMLGYYGASPADRDPKVVKLAEEQSGKKPITQRPADLLPPEWEKQSKEAATLKGFNGTDEDVLTYALFPQVAPVFFEHRAEGPHSVALTDAQLKAEAEGDEKSLAVAGPVTYNVNVGGTVREVTVQQA.

The Pyruvate carboxyltransferase domain occupies 14 to 276 (VGITELVLRD…TTNLDYDRLH (263 aa)). Substrate is bound by residues 22 to 26 (RDAHQ), alanine 59, and lysine 184. Aspartate 23 contributes to the Co(2+) binding site. The Co(2+) site is built by lysine 184, histidine 215, and histidine 217. At lysine 184 the chain carries N6-carboxylysine; partial.

In terms of assembly, homodimer. Transcarboxylase is composed of three subunits: 1.3S, 5S, and 12S. The core of the enzyme is composed of six 12S subunits. On each side of the core there are three pairs of 5S subunits. Each 5S dimer is attached to the core by two 1.3S subunits. Thus the total number of chains is 30 (6 + 12 + 12). Co(2+) is required as a cofactor. In terms of processing, lys-184 is carboxylated in the free enzyme and helps to coordinate the cobalt ion. Lys-184 is partially carboxylated in the complex with pyruvate, but is not carboxylated in the oxaloacetate-bound form.

It catalyses the reaction (S)-methylmalonyl-CoA + pyruvate = propanoyl-CoA + oxaloacetate. Functionally, the 5S subunit specifically catalyzes the transfer of the carboxyl group from biotin of the 1.3S subunit to pyruvate to form oxaloacetate and 1.3S biotin. In Propionibacterium freudenreichii subsp. shermanii, this protein is Methylmalonyl-CoA carboxyltransferase 5S subunit.